The following is a 249-amino-acid chain: tRNA pseudouridine synthase A (249 aa).

Asp52 (nucleophile) is an active-site residue. Tyr111 serves as a coordination point for substrate.

The protein belongs to the tRNA pseudouridine synthase TruA family. In terms of assembly, homodimer.

It carries out the reaction uridine(38/39/40) in tRNA = pseudouridine(38/39/40) in tRNA. In terms of biological role, formation of pseudouridine at positions 38, 39 and 40 in the anticodon stem and loop of transfer RNAs. This Maricaulis maris (strain MCS10) (Caulobacter maris) protein is tRNA pseudouridine synthase A.